Consider the following 544-residue polypeptide: Shootin-1 (544 aa).

Coiled coils occupy residues 17 to 100 (SNQV…LKRK), 141 to 184 (IVIT…EKHD), and 259 to 349 (EALQ…QVSN). A disordered region spans residues 343–544 (KLQQVSNPPT…TTTICTEQLS (202 aa)). The span at 352–371 (TAAPAPPPPPPPPPPPPPPS) shows a compositional bias: pro residues. Over residues 372–383 (SSSSNPLSSLLS) the composition is skewed to low complexity. Basic and acidic residues predominate over residues 397-412 (LVEKDSSEKSPEKDVR). The span at 469 to 479 (SSSPGPRPPSP) shows a compositional bias: pro residues. Residues 480–504 (SEKSELEKALQRRREAVKSAKNNTN) are a coiled coil. Basic and acidic residues predominate over residues 481–497 (EKSELEKALQRRREAVK). The segment covering 499–544 (AKNNTNPSSVVDLTQIKQTRSEPGQNTGDQETLRHTTTTICTEQLS) has biased composition (polar residues).

This sequence belongs to the shootin family.

Its subcellular location is the perikaryon. The protein localises to the cell projection. It is found in the axon. It localises to the growth cone. The protein resides in the cytoplasm. Its subcellular location is the cytoskeleton. The protein localises to the filopodium. It is found in the lamellipodium. In terms of biological role, involved in the generation of internal asymmetric signals required for neuronal polarization and neurite outgrowth. The protein is Shootin-1 of Danio rerio (Zebrafish).